The chain runs to 621 residues: 1-deoxy-D-xylulose-5-phosphate synthase (621 aa).

Residues His-80 and 121-123 (GHS) contribute to the thiamine diphosphate site. Asp-152 serves as a coordination point for Mg(2+). Residues 153 to 154 (GA), Asn-181, Tyr-288, and Glu-370 each bind thiamine diphosphate. Residue Asn-181 participates in Mg(2+) binding.

Belongs to the transketolase family. DXPS subfamily. As to quaternary structure, homodimer. It depends on Mg(2+) as a cofactor. Thiamine diphosphate serves as cofactor.

It catalyses the reaction D-glyceraldehyde 3-phosphate + pyruvate + H(+) = 1-deoxy-D-xylulose 5-phosphate + CO2. It participates in metabolic intermediate biosynthesis; 1-deoxy-D-xylulose 5-phosphate biosynthesis; 1-deoxy-D-xylulose 5-phosphate from D-glyceraldehyde 3-phosphate and pyruvate: step 1/1. Its function is as follows. Catalyzes the acyloin condensation reaction between C atoms 2 and 3 of pyruvate and glyceraldehyde 3-phosphate to yield 1-deoxy-D-xylulose-5-phosphate (DXP). The chain is 1-deoxy-D-xylulose-5-phosphate synthase from Shewanella frigidimarina (strain NCIMB 400).